The chain runs to 321 residues: MMVTVIGAGSFGTAIAQVLSWNAEMVRLMARRSEVVENINRTRENSAYHPGVKLRDNIEATLMDGSVLEESEYVFMAVPSGNLRSIVRSMNSSLEDKKIVSCIKGIEHPGLKTMSSVIREETGSRTVFSISGPNFADELIRGMTSGITVGASTRYAREIAGLLKSPRIILDHSENVEGVEFCGILKNVYAVAMGILDGQITGENHRHSLLTLCFREMNLILNEMGYGELHDRFCGFGDFLLTSTTDKSRNRTLGLMLGKKMRLSEDSTITIESLRSIRAIRELTEGLELPVLEMVYQTMQEPENVNLYIREFQERISRPEF.

Residues Ser10, Phe11, Arg31, Arg32, and Lys104 each coordinate NADPH. 2 residues coordinate sn-glycerol 3-phosphate: Lys104 and Gly132. Ala136 lines the NADPH pocket. Residues Lys186, Asp238, Ser248, Arg249, and Asn250 each contribute to the sn-glycerol 3-phosphate site. Lys186 serves as the catalytic Proton acceptor. Arg249 contacts NADPH. Residue Glu272 participates in NADPH binding.

This sequence belongs to the NAD-dependent glycerol-3-phosphate dehydrogenase family.

The protein localises to the cytoplasm. The enzyme catalyses sn-glycerol 3-phosphate + NAD(+) = dihydroxyacetone phosphate + NADH + H(+). It carries out the reaction sn-glycerol 3-phosphate + NADP(+) = dihydroxyacetone phosphate + NADPH + H(+). Functionally, catalyzes the reduction of the glycolytic intermediate dihydroxyacetone phosphate (DHAP) to sn-glycerol 3-phosphate (G3P). The polypeptide is Glycerol-3-phosphate dehydrogenase [NAD(P)+] (Methanothermobacter thermautotrophicus (strain ATCC 29096 / DSM 1053 / JCM 10044 / NBRC 100330 / Delta H) (Methanobacterium thermoautotrophicum)).